A 180-amino-acid polypeptide reads, in one-letter code: Large ribosomal subunit protein uL5 (180 aa).

It belongs to the universal ribosomal protein uL5 family. In terms of assembly, part of the 50S ribosomal subunit; part of the 5S rRNA/L5/L18/L25 subcomplex. Contacts the 5S rRNA and the P site tRNA. Forms a bridge to the 30S subunit in the 70S ribosome.

Functionally, this is one of the proteins that bind and probably mediate the attachment of the 5S RNA into the large ribosomal subunit, where it forms part of the central protuberance. In the 70S ribosome it contacts protein S13 of the 30S subunit (bridge B1b), connecting the 2 subunits; this bridge is implicated in subunit movement. Contacts the P site tRNA; the 5S rRNA and some of its associated proteins might help stabilize positioning of ribosome-bound tRNAs. The sequence is that of Large ribosomal subunit protein uL5 from Anaeromyxobacter dehalogenans (strain 2CP-1 / ATCC BAA-258).